A 176-amino-acid chain; its full sequence is Lipoprotein signal peptidase (176 aa).

The next 4 helical transmembrane spans lie at 26-46 (LWMA…IVIV), 60-80 (FFNL…ADAG), 82-102 (WQRW…VWLL), and 107-127 (GQKL…GNVV). Catalysis depends on residues Asp137 and Asp155. Residues 147–167 (HWPAFNVADCAITVGAVLLIV) form a helical membrane-spanning segment.

It belongs to the peptidase A8 family.

It localises to the cell inner membrane. It catalyses the reaction Release of signal peptides from bacterial membrane prolipoproteins. Hydrolyzes -Xaa-Yaa-Zaa-|-(S,diacylglyceryl)Cys-, in which Xaa is hydrophobic (preferably Leu), and Yaa (Ala or Ser) and Zaa (Gly or Ala) have small, neutral side chains.. Its pathway is protein modification; lipoprotein biosynthesis (signal peptide cleavage). This protein specifically catalyzes the removal of signal peptides from prolipoproteins. The sequence is that of Lipoprotein signal peptidase from Cupriavidus pinatubonensis (strain JMP 134 / LMG 1197) (Cupriavidus necator (strain JMP 134)).